The following is a 96-amino-acid chain: Putative membrane protein insertion efficiency factor (96 aa).

Residues 68–96 form a disordered region; the sequence is DPVPEHFPARHPRPQGSPPTDHPPTDQPS. Positions 82–96 are enriched in pro residues; sequence QGSPPTDHPPTDQPS.

This sequence belongs to the UPF0161 family.

Its subcellular location is the cell membrane. Functionally, could be involved in insertion of integral membrane proteins into the membrane. This is Putative membrane protein insertion efficiency factor from Deinococcus radiodurans (strain ATCC 13939 / DSM 20539 / JCM 16871 / CCUG 27074 / LMG 4051 / NBRC 15346 / NCIMB 9279 / VKM B-1422 / R1).